The primary structure comprises 630 residues: MDGFVQEWSNLPRSDNGLHMDQLVGELPTDGGFEPQTRARSNTWPCPRPENFVEPVDELDSTKASNQQLADPQQAMQNANAAKKNSSRRNAWGNLSYADLITHAIGSATDKRLTLSQIYEWMVQNVAYFKDKGDSNSSAGWKNSIRHNLSLHSRFMRVQNEGTGKSSWWMLNPDAKPGKSVRRRAASMETSRYEKRRGRAKKRVEALRQAGAVGLNDATPSPSSSVSEGLDHFPESPLHSGGFQLSPDFRQRASSNASSCGRLSPIRALDLEPDWGYSVDYQNTTMTQAQAQALDQLTGSMADELKLQNDMLQQQGFSAASGLPTQPPPPYQQQQQQQQQQAQQQSQLPQGYTLNGPVSAPGYNTLQPQAQQQQQQQQQQQQQQQQPQCLLHRSLNCGCLHSTRDGLSPNSVTTTMSPAYPNSEPSSDSLNTYSNSILLDAASDNGSLLVQQQQQQQQQQQQQQQQQQQLSSGLEGQCLEALNSEQIDEFNLENFQGGLECNVEELLQQEMIYDGLLDINIPLPAVNTNATNVILTNNSTNNSSSGCNISAGVQLSCSQLQAELQLQQQQQQQQQQQQQQQQQQQQQQQQLLLSNNNNNNNNSLELATQTATRVQYTQPSVVTSPPSWVH.

The interval 1-45 is disordered; the sequence is MDGFVQEWSNLPRSDNGLHMDQLVGELPTDGGFEPQTRARSNTWP. T43 is modified (phosphothreonine; by PKB/AKT1). Positions 92-198 form a DNA-binding region, fork-head; the sequence is WGNLSYADLI…ETSRYEKRRG (107 aa). S187 carries the post-translational modification Phosphoserine; by PKB/AKT1. Positions 214–260 are disordered; it reads GLNDATPSPSSSVSEGLDHFPESPLHSGGFQLSPDFRQRASSNASSC. Residues 218-227 show a composition bias toward polar residues; that stretch reads ATPSPSSSVS. Position 255 is a phosphoserine; by PKB/AKT1 (S255). Phosphoserine occurs at positions 258, 259, and 264. Disordered regions lie at residues 318–379 and 403–432; these read SAAS…QQQQ and TRDG…SLNT. Composition is skewed to low complexity over residues 332-350 and 367-379; these read QQQQ…QLPQ and QPQA…QQQQ. Composition is skewed to polar residues over residues 408–417 and 423–432; these read SPNSVTTTMS and SEPSSDSLNT.

Interacts with melt.

Its subcellular location is the cytoplasm. It localises to the nucleus. Transcription factor involved in the regulation of the insulin signaling pathway. Consistently activates both the downstream target Thor\d4EBP and the feedback control target InR. Involved in negative regulation of the cell cycle, modulating cell growth and proliferation. In response to cellular stresses, such as nutrient deprivation or increased levels of reactive oxygen species, foxo is activated and inhibits growth through the action of target genes such as Thor. Foxo activated in the adult fat body can regulate lifespan in adults; an insulin peptide itself may function as one secondary messenger of insulin-regulated aging. Also regulates Lip4, homolog of human acid lipases, thereby acting as a key modulator of lipid metabolism by insulin signaling and integrates insulin responses to glucose and lipid homeostasis. The sequence is that of Forkhead box protein O from Drosophila grimshawi (Hawaiian fruit fly).